We begin with the raw amino-acid sequence, 267 residues long: L-aspartate dehydrogenase 2 (267 aa).

Residues Ala-123 and Asn-189 each contribute to the NAD(+) site. His-219 is an active-site residue.

It belongs to the L-aspartate dehydrogenase family.

It carries out the reaction L-aspartate + NADP(+) + H2O = oxaloacetate + NH4(+) + NADPH + H(+). The enzyme catalyses L-aspartate + NAD(+) + H2O = oxaloacetate + NH4(+) + NADH + H(+). The protein operates within cofactor biosynthesis; NAD(+) biosynthesis; iminoaspartate from L-aspartate (dehydrogenase route): step 1/1. Specifically catalyzes the NAD or NADP-dependent dehydrogenation of L-aspartate to iminoaspartate. The protein is L-aspartate dehydrogenase 2 of Bordetella pertussis (strain Tohama I / ATCC BAA-589 / NCTC 13251).